A 184-amino-acid chain; its full sequence is Probable RNA 2'-phosphotransferase (184 aa).

It belongs to the KptA/TPT1 family.

In terms of biological role, removes the 2'-phosphate from RNA via an intermediate in which the phosphate is ADP-ribosylated by NAD followed by a presumed transesterification to release the RNA and generate ADP-ribose 1''-2''-cyclic phosphate (APPR&gt;P). May function as an ADP-ribosylase. The protein is Probable RNA 2'-phosphotransferase of Escherichia coli O9:H4 (strain HS).